We begin with the raw amino-acid sequence, 299 residues long: Prohibitin-2 (299 aa).

Residue alanine 2 is modified to N-acetylalanine. Residues 19–49 form a necessary for transcriptional repression region; that stretch reads MGTALKLLLGAGAVAYGVRESVFTVEGGHRA. Tyrosine 128 carries the phosphotyrosine modification. Lysine 147 carries the post-translational modification N6-acetyllysine. The segment at 150–174 is necessary for transcriptional repression; sequence ASQLITQRAQVSLLIRRELTERAKD. Serine 151 is modified (phosphoserine). Residues 190-238 are a coiled coil; sequence SREYTAAVEAKQVAQQEAQRAQFLVEKAKQEQRQKIVQAEGEAEAAKML. 4 positions are modified to N6-acetyllysine: lysine 200, lysine 236, lysine 250, and lysine 262.

Belongs to the prohibitin family. The mitochondrial prohibitin complex consists of two subunits (PHB1 and PHB2), assembled into a membrane-associated ring-shaped supercomplex of approximately 1 mDa. Interacts with ESR1, HDAC1 and HDAC5. Interacts with ZNF703. Interacts with STOML2. Interacts with ARFGEF3. Interacts with SPHK2. Interacts with COX4I1; the interaction associates PHB2 with COX. Interacts with MAP1LC3B (membrane-bound form LC3-II); the interaction is direct and upon mitochondrial depolarization and proteasome-dependent outer membrane rupture. Interacts with IGFBP6 (via C-terminal domain). Interacts with CLPB. Interacts with CD86 (via cytoplasmic domain); the interactions increases after priming with CD40. Interacts with AFG3L2. Interacts with DNAJC19. Interacts with AKT2; this interaction may be important for myogenic differentiation. Post-translationally, phosphorylated. Tyrosine phosphorylation is indirectly stimulated by IGFBP6. Widely expressed in different tissues.

Its subcellular location is the mitochondrion inner membrane. It is found in the cytoplasm. The protein localises to the nucleus. The protein resides in the cell membrane. Its function is as follows. Protein with pleiotropic attributes mediated in a cell-compartment- and tissue-specific manner, which include the plasma membrane-associated cell signaling functions, mitochondrial chaperone, and transcriptional co-regulator of transcription factors and sex steroid hormones in the nucleus. In the mitochondria, together with PHB, forms large ring complexes (prohibitin complexes) in the inner mitochondrial membrane (IMM) and functions as a chaperone protein that stabilizes mitochondrial respiratory enzymes and maintains mitochondrial integrity in the IMM, which is required for mitochondrial morphogenesis, neuronal survival, and normal lifespan. The prohibitin complex, with DNAJC19, regulates cardiolipin remodeling and the protein turnover of OMA1 in a cardiolipin-binding manner. Also regulates cytochrome-c oxidase assembly (COX) and mitochondrial respiration. Binding to sphingoid 1-phosphate (SPP) modulates its regulator activity. Has a key role of mitophagy receptor involved in targeting mitochondria for autophagic degradation. Involved in mitochondrial-mediated antiviral innate immunity, activates RIG-I-mediated signal transduction and production of IFNB1 and pro-inflammatory cytokine IL6. Functionally, in the nucleus, serves as transcriptional co-regulator. Acts as a mediator of transcriptional repression by nuclear hormone receptors via recruitment of histone deacetylases. Functions as an estrogen receptor (ER)-selective coregulator that potentiates the inhibitory activities of antiestrogens and represses the activity of estrogens. Competes with NCOA1 for modulation of ER transcriptional activity. In terms of biological role, in the plasma membrane, is involved in IGFBP6-induced cell migration. Cooperates with CD86 to mediate CD86-signaling in B lymphocytes that regulates the level of IgG1 produced through the activation of distal signaling intermediates. Upon CD40 engagement, required to activate NF-kappa-B signaling pathway via phospholipase C and protein kinase C activation. The sequence is that of Prohibitin-2 from Mus musculus (Mouse).